The following is a 504-amino-acid chain: ATP synthase subunit alpha (504 aa).

An ATP-binding site is contributed by 169-176; sequence GDRGTGKT.

This sequence belongs to the ATPase alpha/beta chains family. F-type ATPases have 2 components, CF(1) - the catalytic core - and CF(0) - the membrane proton channel. CF(1) has five subunits: alpha(3), beta(3), gamma(1), delta(1), epsilon(1). CF(0) has three main subunits: a(1), b(2) and c(9-12). The alpha and beta chains form an alternating ring which encloses part of the gamma chain. CF(1) is attached to CF(0) by a central stalk formed by the gamma and epsilon chains, while a peripheral stalk is formed by the delta and b chains.

It localises to the cell inner membrane. It catalyses the reaction ATP + H2O + 4 H(+)(in) = ADP + phosphate + 5 H(+)(out). In terms of biological role, produces ATP from ADP in the presence of a proton gradient across the membrane. The alpha chain is a regulatory subunit. The chain is ATP synthase subunit alpha from Leptospira biflexa serovar Patoc (strain Patoc 1 / Ames).